Here is a 165-residue protein sequence, read N- to C-terminus: MKIMKKYIKTAFFCSMYWLIVQLNIANLGTRIPDKYFRQKHIIFKSFNFEKHGKFWNKWFYVRKWKHKILDGHKLNRNIYDQRHLMTINIDEIEKMIIETKRAELIHWISILPVIIFNKGPRVVKYINIFYAMIANVPIIIVQRYNRPRLTQLLRILKRRGERHD.

The signal sequence occupies residues 1 to 28 (MKIMKKYIKTAFFCSMYWLIVQLNIANL). Residues 126–145 (YINIFYAMIANVPIIIVQRY) traverse the membrane as a helical segment.

Belongs to the acyltransferase CrtO family.

It localises to the cell membrane. It functions in the pathway carotenoid biosynthesis; staphyloxanthin biosynthesis; staphyloxanthin from farnesyl diphosphate: step 5/5. Catalyzes the acylation of glycosyl-4,4'-diaponeurosporenoate, i.e. the esterification of glucose at the C6'' position with the carboxyl group of the C(15) fatty acid 12-methyltetradecanoic acid, to yield staphyloxanthin. This is the last step in the biosynthesis of this orange pigment, present in most staphylococci strains. The sequence is that of Glycosyl-4,4'-diaponeurosporenoate acyltransferase (crtO) from Staphylococcus aureus (strain MRSA252).